A 202-amino-acid polypeptide reads, in one-letter code: Superoxide dismutase [Mn] (202 aa).

Residue His27 participates in Mn(2+) binding. A phosphothreonine mark is found at Thr34 and Thr70. Positions 82, 164, and 168 each coordinate Mn(2+).

This sequence belongs to the iron/manganese superoxide dismutase family. Homodimer. Mn(2+) is required as a cofactor.

It carries out the reaction 2 superoxide + 2 H(+) = H2O2 + O2. In terms of biological role, destroys superoxide anion radicals which are normally produced within the cells and which are toxic to biological systems. The sequence is that of Superoxide dismutase [Mn] (sodA) from Halalkalibacterium halodurans (strain ATCC BAA-125 / DSM 18197 / FERM 7344 / JCM 9153 / C-125) (Bacillus halodurans).